Reading from the N-terminus, the 220-residue chain is Protein Syd (220 aa).

The protein belongs to the Syd family.

The protein localises to the cell inner membrane. Interacts with the SecY protein in vivo. May bind preferentially to an uncomplexed state of SecY, thus functioning either as a chelating agent for excess SecY in the cell or as a regulatory factor that negatively controls the translocase function. The chain is Protein Syd from Shewanella loihica (strain ATCC BAA-1088 / PV-4).